Consider the following 108-residue polypeptide: Inner membrane protein H108R (108 aa).

Residues 10-32 traverse the membrane as a helical segment; sequence LIVIITILITTRELSTTMLIVSL. Over residues 49 to 64 the composition is skewed to polar residues; it reads ENNTFSMPQKNSFNES. Residues 49-69 form a disordered region; that stretch reads ENNTFSMPQKNSFNESYNKDK. Residues N50 and N62 are each glycosylated (N-linked (GlcNAc...) asparagine; by host).

This sequence belongs to the asfivirus H108R family.

The protein resides in the virion membrane. The chain is Inner membrane protein H108R from African swine fever virus (strain Badajoz 1971 Vero-adapted) (Ba71V).